The chain runs to 233 residues: Gamma-interferon-responsive lysosomal thiol protein (233 aa).

The signal sequence occupies residues 1–26; it reads MVSSSLTKLVFFGCLLLLTFTDNLVA. Cys42 and Cys45 are oxidised to a cystine. N-linked (GlcNAc...) asparagine glycans are attached at residues Asn80 and Asn207. A propeptide spans 200–233 (removed in mature form); the sequence is TTLPKVCNSSASMSKSPERKWKLQVSYANKATNY.

The protein belongs to the GILT family. As to quaternary structure, dimer; disulfide-linked. As to expression, expressed in the outer integument of seed coat.

The protein resides in the secreted. It localises to the lysosome. Functionally, lysosomal thiol reductase that can reduce protein disulfide bonds. May facilitate the complete unfolding of proteins destined for lysosomal degradation. This is Gamma-interferon-responsive lysosomal thiol protein from Arabidopsis thaliana (Mouse-ear cress).